An 86-amino-acid chain; its full sequence is Large ribosomal subunit protein bL31 (86 aa).

The disordered stretch occupies residues 65 to 86 (YRMASSDSSEQKDKSSEEKKES). A compositionally biased stretch (basic and acidic residues) spans 73–86 (SEQKDKSSEEKKES).

Belongs to the bacterial ribosomal protein bL31 family. Type A subfamily. Part of the 50S ribosomal subunit.

Functionally, binds the 23S rRNA. The chain is Large ribosomal subunit protein bL31 from Prochlorococcus marinus (strain NATL1A).